The chain runs to 269 residues: Sushi domain-containing protein 3 (269 aa).

Positions 1–23 are disordered; it reads MRRTSATLRGRARPRWRAGNTTP. At 1 to 103 the chain is on the extracellular side; sequence MRRTSATLRG…VPPHETFGFK (103 aa). A Sushi domain is found at 30 to 93; it reads GTCAQLHPPP…WSSGSPVCKA (64 aa). Cystine bridges form between C32–C75 and C61–C91. The chain crosses the membrane as a helical span at residues 104-124; it reads VAVIASIVSCAIILLMSMAFL. Residues 125–269 are Cytoplasmic-facing; that stretch reads TCCLLKCVQK…PGRPKVYLPG (145 aa). Residues 171–237 are disordered; sequence NNSSSVGGGN…RMGTPGPGGC (67 aa). The span at 176-190 shows a compositional bias: gly residues; it reads VGGGNGGPSGGGGKP.

It localises to the cell membrane. This chain is Sushi domain-containing protein 3 (Susd3), found in Mus musculus (Mouse).